A 124-amino-acid chain; its full sequence is Ribonuclease pancreatic (124 aa).

Residues 1–13 show a composition bias toward basic and acidic residues; sequence KESAAAKFERQHM. Residues 1–23 form a disordered region; the sequence is KESAAAKFERQHMDPSASSISSS. Residues lysine 7 and arginine 10 each contribute to the substrate site. Histidine 12 functions as the Proton acceptor in the catalytic mechanism. Disulfide bonds link cysteine 26/cysteine 84, cysteine 40/cysteine 95, cysteine 58/cysteine 110, and cysteine 65/cysteine 72. A glycan (N-linked (GlcNAc...) asparagine) is linked at asparagine 34. Substrate is bound by residues 41–45, lysine 66, and arginine 85; that span reads KPVNT. The active-site Proton donor is histidine 119.

The protein belongs to the pancreatic ribonuclease family. As to quaternary structure, monomer. Interacts with and forms tight 1:1 complexes with RNH1. Dimerization of two such complexes may occur. Interaction with RNH1 inhibits this protein. Pancreas.

It localises to the secreted. It carries out the reaction an [RNA] containing cytidine + H2O = an [RNA]-3'-cytidine-3'-phosphate + a 5'-hydroxy-ribonucleotide-3'-[RNA].. It catalyses the reaction an [RNA] containing uridine + H2O = an [RNA]-3'-uridine-3'-phosphate + a 5'-hydroxy-ribonucleotide-3'-[RNA].. Functionally, endonuclease that catalyzes the cleavage of RNA on the 3' side of pyrimidine nucleotides. Acts on single-stranded and double-stranded RNA. The protein is Ribonuclease pancreatic (RNASE1) of Alces alces alces (European moose).